Here is a 239-residue protein sequence, read N- to C-terminus: Large ribosomal subunit protein mL67 (239 aa).

Belongs to the mitochondrion-specific ribosomal protein mL67 family. As to quaternary structure, component of the mitochondrial large ribosomal subunit (mt-LSU).

The protein localises to the nucleus. The protein resides in the mitochondrion. Functionally, component of the mitochondrial ribosome (mitoribosome), a dedicated translation machinery responsible for the synthesis of mitochondrial genome-encoded proteins, including at least some of the essential transmembrane subunits of the mitochondrial respiratory chain. The mitoribosomes are attached to the mitochondrial inner membrane and translation products are cotranslationally integrated into the membrane. mL67/MHR1 also has extraribosomal functions, being involved in regulation of mitochondrial DNA recombination, maintenance and repair, and generation of homoplasmic cells. mL67/MHR1 also acts as transcription factor involved in regulation of RNA polymerase II-dependent transcription. The sequence is that of Large ribosomal subunit protein mL67 (MHR1) from Candida albicans (strain SC5314 / ATCC MYA-2876) (Yeast).